Consider the following 181-residue polypeptide: 6,7-dimethyl-8-ribityllumazine synthase (181 aa).

5-amino-6-(D-ribitylamino)uracil-binding positions include Tyr27, Ala58–Glu60, and Cys87–Ile89. Glu92 to Thr93 is a (2S)-2-hydroxy-3-oxobutyl phosphate binding site. The active-site Proton donor is His95. 5-amino-6-(D-ribitylamino)uracil is bound at residue Asn120. Arg134 contacts (2S)-2-hydroxy-3-oxobutyl phosphate.

It belongs to the DMRL synthase family.

The enzyme catalyses (2S)-2-hydroxy-3-oxobutyl phosphate + 5-amino-6-(D-ribitylamino)uracil = 6,7-dimethyl-8-(1-D-ribityl)lumazine + phosphate + 2 H2O + H(+). It participates in cofactor biosynthesis; riboflavin biosynthesis; riboflavin from 2-hydroxy-3-oxobutyl phosphate and 5-amino-6-(D-ribitylamino)uracil: step 1/2. Its function is as follows. Catalyzes the formation of 6,7-dimethyl-8-ribityllumazine by condensation of 5-amino-6-(D-ribitylamino)uracil with 3,4-dihydroxy-2-butanone 4-phosphate. This is the penultimate step in the biosynthesis of riboflavin. The sequence is that of 6,7-dimethyl-8-ribityllumazine synthase from Methylobacterium nodulans (strain LMG 21967 / CNCM I-2342 / ORS 2060).